The following is a 459-amino-acid chain: Serine--tRNA ligase (459 aa).

L-serine is bound at residue T254–E256. ATP is bound by residues R285 to E287 and V301. E308 contributes to the L-serine binding site. E372–S375 serves as a coordination point for ATP. T408 serves as a coordination point for L-serine.

It belongs to the class-II aminoacyl-tRNA synthetase family. Type-1 seryl-tRNA synthetase subfamily. Homodimer. The tRNA molecule binds across the dimer.

The protein resides in the cytoplasm. It carries out the reaction tRNA(Ser) + L-serine + ATP = L-seryl-tRNA(Ser) + AMP + diphosphate + H(+). It catalyses the reaction tRNA(Sec) + L-serine + ATP = L-seryl-tRNA(Sec) + AMP + diphosphate + H(+). The protein operates within aminoacyl-tRNA biosynthesis; selenocysteinyl-tRNA(Sec) biosynthesis; L-seryl-tRNA(Sec) from L-serine and tRNA(Sec): step 1/1. Catalyzes the attachment of serine to tRNA(Ser). Is also able to aminoacylate tRNA(Sec) with serine, to form the misacylated tRNA L-seryl-tRNA(Sec), which will be further converted into selenocysteinyl-tRNA(Sec). The protein is Serine--tRNA ligase of Staphylothermus marinus (strain ATCC 43588 / DSM 3639 / JCM 9404 / F1).